We begin with the raw amino-acid sequence, 229 residues long: Protein-L-isoaspartate O-methyltransferase (229 aa).

Residue S74 is part of the active site.

It belongs to the methyltransferase superfamily. L-isoaspartyl/D-aspartyl protein methyltransferase family.

It is found in the cytoplasm. It carries out the reaction [protein]-L-isoaspartate + S-adenosyl-L-methionine = [protein]-L-isoaspartate alpha-methyl ester + S-adenosyl-L-homocysteine. In terms of biological role, catalyzes the methyl esterification of L-isoaspartyl residues in peptides and proteins that result from spontaneous decomposition of normal L-aspartyl and L-asparaginyl residues. It plays a role in the repair and/or degradation of damaged proteins. This Pelotomaculum thermopropionicum (strain DSM 13744 / JCM 10971 / SI) protein is Protein-L-isoaspartate O-methyltransferase.